We begin with the raw amino-acid sequence, 105 residues long: N(2)-fixation sustaining protein CowN (105 aa).

The protein belongs to the CowN family.

In terms of biological role, is required to sustain N(2)-dependent growth in the presence of low levels of carbon monoxide (CO). Probably acts by protecting the N(2) fixation ability of the nitrogenase complex, which is inactivated in the presence of CO. The chain is N(2)-fixation sustaining protein CowN from Tolumonas auensis (strain DSM 9187 / NBRC 110442 / TA 4).